Consider the following 422-residue polypeptide: L-threonine dehydratase biosynthetic IlvA (422 aa).

K56 carries the N6-(pyridoxal phosphate)lysine modification. Residues N83, 189–193, and S315 contribute to the pyridoxal 5'-phosphate site; that span reads GGGGL. An ACT-like domain is found at 339–413; it reads HYFILNFPQR…FDKSNIYINE (75 aa).

The protein belongs to the serine/threonine dehydratase family. Homotetramer. Pyridoxal 5'-phosphate serves as cofactor.

The catalysed reaction is L-threonine = 2-oxobutanoate + NH4(+). It functions in the pathway amino-acid biosynthesis; L-isoleucine biosynthesis; 2-oxobutanoate from L-threonine: step 1/1. Functionally, catalyzes the anaerobic formation of alpha-ketobutyrate and ammonia from threonine in a two-step reaction. The first step involved a dehydration of threonine and a production of enamine intermediates (aminocrotonate), which tautomerizes to its imine form (iminobutyrate). Both intermediates are unstable and short-lived. The second step is the nonenzymatic hydrolysis of the enamine/imine intermediates to form 2-ketobutyrate and free ammonia. In the low water environment of the cell, the second step is accelerated by RidA. This Staphylococcus saprophyticus subsp. saprophyticus (strain ATCC 15305 / DSM 20229 / NCIMB 8711 / NCTC 7292 / S-41) protein is L-threonine dehydratase biosynthetic IlvA (ilvA).